The sequence spans 156 residues: RNA polymerase sigma factor SigS (156 aa).

A Polymerase core binding motif is present at residues 29-44; it reads EYYQLLLIKMWQLSQI. The segment at residues 126–145 is a DNA-binding region (H-T-H motif); it reads QYEIADIMSLSTSTIKLIKA.

It belongs to the sigma-70 factor family.

Its function is as follows. Sigma factors are initiation factors that promote the attachment of RNA polymerase to specific initiation sites and are then released. Sigma-S contributes to the protection against external stress, thus playing a role in cellular fitness and survival. The sequence is that of RNA polymerase sigma factor SigS (sigS) from Staphylococcus aureus (strain MRSA252).